A 286-amino-acid chain; its full sequence is Phosphatidylglycerol--prolipoprotein diacylglyceryl transferase (286 aa).

4 helical membrane passes run 25 to 45 (WYAL…RMLL), 65 to 85 (FILW…VLFY), 103 to 123 (GGMS…LFGW), and 127 to 147 (VPIL…LFLG). Residue arginine 148 coordinates a 1,2-diacyl-sn-glycero-3-phospho-(1'-sn-glycerol). The next 3 membrane-spanning stretches (helical) occupy residues 188-208 (AGLE…AGAL), 212-232 (GLII…GEFF), and 248-268 (MGML…ITTW).

The protein belongs to the Lgt family.

It is found in the cell inner membrane. It catalyses the reaction L-cysteinyl-[prolipoprotein] + a 1,2-diacyl-sn-glycero-3-phospho-(1'-sn-glycerol) = an S-1,2-diacyl-sn-glyceryl-L-cysteinyl-[prolipoprotein] + sn-glycerol 1-phosphate + H(+). The protein operates within protein modification; lipoprotein biosynthesis (diacylglyceryl transfer). Its function is as follows. Catalyzes the transfer of the diacylglyceryl group from phosphatidylglycerol to the sulfhydryl group of the N-terminal cysteine of a prolipoprotein, the first step in the formation of mature lipoproteins. The protein is Phosphatidylglycerol--prolipoprotein diacylglyceryl transferase of Rhodopseudomonas palustris (strain ATCC BAA-98 / CGA009).